Reading from the N-terminus, the 732-residue chain is Catalase-peroxidase (732 aa).

The disordered stretch occupies residues 1-23 (MSEQSKCPVTGRTAGHPVAGGGM). The tryptophyl-tyrosyl-methioninium (Trp-Tyr) (with M-246) cross-link spans 97–220 (WHSAGTYRTS…LAAVQMGLIY (124 aa)). His98 functions as the Proton acceptor in the catalytic mechanism. Residues 220-246 (YVNPEGPDGNPDPVAAGRDIRETFARM) constitute a cross-link (tryptophyl-tyrosyl-methioninium (Tyr-Met) (with W-97)). A heme b-binding site is contributed by His261.

This sequence belongs to the peroxidase family. Peroxidase/catalase subfamily. As to quaternary structure, homodimer or homotetramer. Requires heme b as cofactor. Formation of the three residue Trp-Tyr-Met cross-link is important for the catalase, but not the peroxidase activity of the enzyme.

The catalysed reaction is H2O2 + AH2 = A + 2 H2O. The enzyme catalyses 2 H2O2 = O2 + 2 H2O. Bifunctional enzyme with both catalase and broad-spectrum peroxidase activity. This chain is Catalase-peroxidase, found in Chlorobium limicola (strain DSM 245 / NBRC 103803 / 6330).